The chain runs to 590 residues: V-type ATP synthase alpha chain (590 aa).

Position 232 to 239 (Gly-232 to Thr-239) interacts with ATP.

This sequence belongs to the ATPase alpha/beta chains family.

The catalysed reaction is ATP + H2O + 4 H(+)(in) = ADP + phosphate + 5 H(+)(out). Its function is as follows. Produces ATP from ADP in the presence of a proton gradient across the membrane. The V-type alpha chain is a catalytic subunit. The sequence is that of V-type ATP synthase alpha chain from Thermoanaerobacter sp. (strain X514).